The sequence spans 160 residues: Ribosomal RNA large subunit methyltransferase H (160 aa).

S-adenosyl-L-methionine is bound by residues leucine 76, glycine 108, and 127 to 132 (LGKMTW).

It belongs to the RNA methyltransferase RlmH family. In terms of assembly, homodimer.

The protein localises to the cytoplasm. It catalyses the reaction pseudouridine(1915) in 23S rRNA + S-adenosyl-L-methionine = N(3)-methylpseudouridine(1915) in 23S rRNA + S-adenosyl-L-homocysteine + H(+). Functionally, specifically methylates the pseudouridine at position 1915 (m3Psi1915) in 23S rRNA. In Rhizobium leguminosarum bv. trifolii (strain WSM2304), this protein is Ribosomal RNA large subunit methyltransferase H.